An 87-amino-acid polypeptide reads, in one-letter code: Large ribosomal subunit protein uL23c (87 aa).

The protein belongs to the universal ribosomal protein uL23 family. In terms of assembly, part of the 50S ribosomal subunit.

Its subcellular location is the plastid. It is found in the chloroplast. Its function is as follows. Binds to 23S rRNA. This Ostreococcus tauri protein is Large ribosomal subunit protein uL23c (rpl23).